The sequence spans 910 residues: Seizure 6-like protein 2 (910 aa).

An N-terminal signal peptide occupies residues 1–27 (MGTPRAQHPPPPQLLFLILLSCPWIQG). Residues 28 to 844 (LPLKEEEILP…DPSRQLEGGN (817 aa)) are Extracellular-facing. An O-glycosylated at one site region spans residues 41–48 (SETPTVAS). Residues 65–152 (EMGYLPGSDR…PLGPEGGEEE (88 aa)) form a disordered region. The segment covering 123–145 (LTPPPGTTAPPPPSPASPGPPLG) has biased composition (pro residues). A disulfide bridge links C173 with C202. Positions 173-286 (CNNNISEGEG…GGFRIHYQAY (114 aa)) constitute a CUB 1 domain. N-linked (GlcNAc...) asparagine glycosylation is found at N176, N222, and N247. The Sushi 1 domain maps to 288 to 347 (LSCGFPPRPAHGDVSVTDLHPGGTATFHCDSGYQLQGEETLICLNGTRPSWNGETPSCMA). 6 disulfides stabilise this stretch: C290/C330, C316/C345, C349/C376, C464/C508, C491/C523, and C527/C553. N332, N355, N373, N473, and N517 each carry an N-linked (GlcNAc...) asparagine glycan. A CUB 2 domain is found at 349–459 (CGGTIHNATL…LLLSLRFEAF (111 aa)). The Sushi 2 domain occupies 462–525 (DRCFAPFLAH…WNDTEPACKA (64 aa)). The CUB 3 domain occupies 527–638 (CGGELSEPAG…QGFVLHFKEV (112 aa)). N641 is a glycosylation site (N-linked (GlcNAc...) asparagine). 3 Sushi domains span residues 642 to 701 (DTCP…ACQK), 703 to 766 (MTCA…KCAL), and 769 to 830 (EPCL…LCKV). 6 cysteine pairs are disulfide-bonded: C644–C686, C672–C699, C705–C747, C733–C764, C771–C813, and C799–C828. The chain crosses the membrane as a helical span at residues 845–865 (LALAILLPLGLVIVLGSGVYI). Topologically, residues 866–910 (YYTKLQGKSLFGFSGSHSYSPITVESDFSNPLYEAGDTREYEVSI) are cytoplasmic.

This sequence belongs to the SEZ6 family. In terms of processing, O-glycosylated with core 1 or possibly core 8 glycans.

The protein resides in the cell membrane. It is found in the endoplasmic reticulum membrane. May contribute to specialized endoplasmic reticulum functions in neurons. This chain is Seizure 6-like protein 2 (SEZ6L2), found in Homo sapiens (Human).